A 294-amino-acid polypeptide reads, in one-letter code: Protoheme IX farnesyltransferase 1 (294 aa).

The next 9 helical transmembrane spans lie at 8–28, 35–55, 82–102, 107–127, 132–152, 162–182, 208–228, 229–249, and 263–283; these read VTKPGIIMGNLISVAGGFLLA, PWLMVATLIGLSLVVASGCAI, AMAALCHGVVLGIIGFGLLIA, AAVFFAAFGYFIYVGVYSLYM, VYGTFIGSLSGAVPPVVGYCA, LILLVMFSLWQMPHSYAIAIF, IVLYIAIYALVVMLLPISGYT, GAAFMAVACITSFWWLLMALR, and QVFAFSIINITALSIAMAVDY.

This sequence belongs to the UbiA prenyltransferase family. Protoheme IX farnesyltransferase subfamily.

It is found in the cell inner membrane. The catalysed reaction is heme b + (2E,6E)-farnesyl diphosphate + H2O = Fe(II)-heme o + diphosphate. Its pathway is porphyrin-containing compound metabolism; heme O biosynthesis; heme O from protoheme: step 1/1. Converts heme B (protoheme IX) to heme O by substitution of the vinyl group on carbon 2 of heme B porphyrin ring with a hydroxyethyl farnesyl side group. This Pseudoalteromonas translucida (strain TAC 125) protein is Protoheme IX farnesyltransferase 1.